A 305-amino-acid chain; its full sequence is Oxygen-dependent coproporphyrinogen-III oxidase (305 aa).

Ser93 serves as a coordination point for substrate. A divalent metal cation-binding residues include His97 and His107. The Proton donor role is filled by His107. 109–111 (NVR) serves as a coordination point for substrate. A divalent metal cation is bound by residues His146 and His176. The interval 241–276 (YVEFNLVFDRGTLFGLQSGGRTESILMSLPPQVRWG) is important for dimerization. 259 to 261 (GGR) serves as a coordination point for substrate.

It belongs to the aerobic coproporphyrinogen-III oxidase family. Homodimer. A divalent metal cation is required as a cofactor.

It is found in the cytoplasm. The catalysed reaction is coproporphyrinogen III + O2 + 2 H(+) = protoporphyrinogen IX + 2 CO2 + 2 H2O. The protein operates within porphyrin-containing compound metabolism; protoporphyrin-IX biosynthesis; protoporphyrinogen-IX from coproporphyrinogen-III (O2 route): step 1/1. Functionally, involved in the heme biosynthesis. Catalyzes the aerobic oxidative decarboxylation of propionate groups of rings A and B of coproporphyrinogen-III to yield the vinyl groups in protoporphyrinogen-IX. The polypeptide is Oxygen-dependent coproporphyrinogen-III oxidase (Pseudomonas paraeruginosa (strain DSM 24068 / PA7) (Pseudomonas aeruginosa (strain PA7))).